A 270-amino-acid chain; its full sequence is uncharacterized protein (270 aa).

Its function is as follows. Possibly involved in pGI2 replication mechanism. This is an uncharacterized protein from Bacillus thuringiensis.